The sequence spans 128 residues: Large-conductance mechanosensitive channel (128 aa).

2 consecutive transmembrane segments (helical) span residues Phe-10–Gly-30 and Gly-76–Val-96.

Belongs to the MscL family. In terms of assembly, homopentamer.

The protein resides in the cell inner membrane. Functionally, channel that opens in response to stretch forces in the membrane lipid bilayer. May participate in the regulation of osmotic pressure changes within the cell. The polypeptide is Large-conductance mechanosensitive channel (Mannheimia succiniciproducens (strain KCTC 0769BP / MBEL55E)).